We begin with the raw amino-acid sequence, 285 residues long: Pantothenate synthetase (285 aa).

ATP is bound at residue 30 to 37 (MGFLHEGH). Catalysis depends on His37, which acts as the Proton donor. (R)-pantoate is bound at residue Gln61. Residue Gln61 coordinates beta-alanine. 147-150 (GQKD) provides a ligand contact to ATP. A (R)-pantoate-binding site is contributed by Gln153. ATP-binding positions include Val176 and 184–187 (KSSR).

The protein belongs to the pantothenate synthetase family. Homodimer.

Its subcellular location is the cytoplasm. The enzyme catalyses (R)-pantoate + beta-alanine + ATP = (R)-pantothenate + AMP + diphosphate + H(+). It functions in the pathway cofactor biosynthesis; (R)-pantothenate biosynthesis; (R)-pantothenate from (R)-pantoate and beta-alanine: step 1/1. In terms of biological role, catalyzes the condensation of pantoate with beta-alanine in an ATP-dependent reaction via a pantoyl-adenylate intermediate. This is Pantothenate synthetase from Listeria monocytogenes serotype 4b (strain F2365).